A 559-amino-acid polypeptide reads, in one-letter code: MASVAVENNVVNHIAEEIIRPVADFSPSLWGDRFLSFSIDNQVETKYAQEIEPLKEQTRSMLLASGRKLSETLNLIDVIERLGIAYHFEKEIDEILDRIYNENSNFEGDVYNEDLCTCRLQFRLLRQHGYNISLKIFSKFLDGNGRLKESLASDVLGLLSLYEASHVRSHGEDILEDALAFSTTHLESATPHLEYPLKEQVRHALEQSLHKGIPRIEIQFFISSVYDKQAIKNDVLLRFAKLDYNMLQMLHKQELAEVSRWWKDLNFVNTLPYARDRVVECYFWALGVYYEPQYSQARVMLVKTIAMISIVDDTYDAYGTVDELAIYTDVIQRWDIKEIDSLPDYMKISYKALLDLYKDYEKEMSRDGRSHVVYYAKERLKELVKSYNIEAKWFIEGHMPPASEYLRNAFVTTTYYYLATTSYLGMKYAKEQQFEWLSKNPKILEGCVTICRVIDDIATYEVEKNRGQLSTGIECYMRDYSVSTKEAMAKFQEMGESGWKDINEGMLRPTPIPMEFLSRILNLARLVDVTYKHNEDGYTHPEKVIKPHIIAMVVDSFKI.

Mg(2+) contacts are provided by Asp-312, Asp-316, Asp-455, Thr-459, and Glu-463. The DDXXD motif signature appears at 312–316 (DDTYD).

The protein belongs to the terpene synthase family. As to quaternary structure, monomer. Mg(2+) serves as cofactor. As to expression, expressed only in treated leaves an not detected in control leaves.

Its subcellular location is the cytoplasm. The catalysed reaction is (2E,6E)-farnesyl diphosphate = (+)-5-epi-aristolochene + diphosphate. It functions in the pathway secondary metabolite biosynthesis; terpenoid biosynthesis. In terms of biological role, catalyzes the cyclization of trans,trans-farnesyl diphosphate (FPP) to the bicyclic intermediate 5-epi-aristolochene, initial step in the conversion of FPP to the sesquiterpenoid antifungal phytoalexin capsidiol. Produces germacrene A as an enzyme-bound intermediate that is not released by the enzyme, but is further cyclized to produce the bicyclic 5-epi-aristolochene. The sequence is that of 5-epiaristolochene synthase (EAS) from Capsicum annuum (Capsicum pepper).